The following is a 552-amino-acid chain: Probable bifunctional methylthioribose-1-phosphate isomerase/methylthioribulose-1-phosphate dehydratase (552 aa).

The tract at residues 1-333 is methylthioribose-1-phosphate isomerase activity; that stretch reads MRPIDDSSLT…VVTEHGVVHG (333 aa). Residues 49 to 51, R91, and Q195 contribute to the substrate site; that span reads RGA. The active-site Proton donor is D236. A substrate-binding site is contributed by 246-247; the sequence is NK. A methylthioribulose-1-phosphate dehydratase activity region spans residues 334 to 535; it reads TVAAEPGARI…AVCELVLRTG (202 aa). Zn(2+) contacts are provided by H427 and H429.

In the N-terminal section; belongs to the eIF-2B alpha/beta/delta subunits family. MtnA subfamily. This sequence in the C-terminal section; belongs to the aldolase class II family. MtnB subfamily. The cofactor is Zn(2+).

It carries out the reaction 5-(methylsulfanyl)-alpha-D-ribose 1-phosphate = 5-(methylsulfanyl)-D-ribulose 1-phosphate. It catalyses the reaction 5-(methylsulfanyl)-D-ribulose 1-phosphate = 5-methylsulfanyl-2,3-dioxopentyl phosphate + H2O. Its pathway is amino-acid biosynthesis; L-methionine biosynthesis via salvage pathway; L-methionine from S-methyl-5-thio-alpha-D-ribose 1-phosphate: step 1/6. It functions in the pathway amino-acid biosynthesis; L-methionine biosynthesis via salvage pathway; L-methionine from S-methyl-5-thio-alpha-D-ribose 1-phosphate: step 2/6. In terms of biological role, bifunctional protein that catalyzes the interconversion of methylthioribose-1-phosphate (MTR-1-P) into methylthioribulose-1-phosphate (MTRu-1-P), and the dehydration of methylthioribulose-1-phosphate (MTRu-1-P) into 2,3-diketo-5-methylthiopentyl-1-phosphate (DK-MTP-1-P). The sequence is that of Probable bifunctional methylthioribose-1-phosphate isomerase/methylthioribulose-1-phosphate dehydratase (mtnAB) from Nocardia farcinica (strain IFM 10152).